Consider the following 177-residue polypeptide: NADH-quinone oxidoreductase subunit B (177 aa).

Cysteine 53, cysteine 54, cysteine 118, and cysteine 148 together coordinate [4Fe-4S] cluster.

It belongs to the complex I 20 kDa subunit family. NDH-1 is composed of 14 different subunits. Subunits NuoB, C, D, E, F, and G constitute the peripheral sector of the complex. Requires [4Fe-4S] cluster as cofactor.

It localises to the cell membrane. The catalysed reaction is a quinone + NADH + 5 H(+)(in) = a quinol + NAD(+) + 4 H(+)(out). Functionally, NDH-1 shuttles electrons from NADH, via FMN and iron-sulfur (Fe-S) centers, to quinones in the respiratory chain. The immediate electron acceptor for the enzyme in this species is believed to be a menaquinone. Couples the redox reaction to proton translocation (for every two electrons transferred, four hydrogen ions are translocated across the cytoplasmic membrane), and thus conserves the redox energy in a proton gradient. The chain is NADH-quinone oxidoreductase subunit B from Anoxybacillus flavithermus (strain DSM 21510 / WK1).